We begin with the raw amino-acid sequence, 307 residues long: Woronin sorting complex protein (307 aa).

A run of 3 helical transmembrane segments spans residues 106-125, 146-167, and 207-227; these read MATY…IWIL, NLIV…IAGA, and AWMP…NYIT. Basic and acidic residues predominate over residues 241–264; that stretch reads GDGAHGDHRHDRERERDRERERHS. Positions 241–307 are disordered; it reads GDGAHGDHRH…YPSLGQNPRY (67 aa). Positions 266-278 are enriched in low complexity; sequence PPHGHGPSHGGRP.

This sequence belongs to the peroxisomal membrane protein PXMP2/4 family. As to quaternary structure, self-assembles into detergent-resistant oligomers and forms a complex with hex-1 assemblies.

It localises to the peroxisome membrane. The protein localises to the cell septum. In terms of biological role, woronin sorting complex protein involved in both Woronin bodies (WB) formation and inherence. Localizes to large peroxisome membranes where it self-assembles into detergent-resistant oligomers that envelop hex-1 assemblies, producing asymmetrical nascent WBs. These structures are then delivered to the cell cortex, which permits partitioning of the nascent WB and WB inheritance. This Neurospora crassa (strain ATCC 24698 / 74-OR23-1A / CBS 708.71 / DSM 1257 / FGSC 987) protein is Woronin sorting complex protein.